Here is a 266-residue protein sequence, read N- to C-terminus: Putative peptidyl-prolyl cis-trans isomerase NifM (266 aa).

One can recognise a PpiC domain in the interval 124-221 (PEQRLTRHLL…LGWHLLWCEA (98 aa)).

It belongs to the PpiC/parvulin rotamase family.

It carries out the reaction [protein]-peptidylproline (omega=180) = [protein]-peptidylproline (omega=0). Functionally, required for the activation and stabilization of the iron-component (NifH) of nitrogenase. Probable PPIase. The protein is Putative peptidyl-prolyl cis-trans isomerase NifM (nifM) of Klebsiella oxytoca.